We begin with the raw amino-acid sequence, 450 residues long: Probable glycine dehydrogenase (decarboxylating) subunit 1 (450 aa).

This sequence belongs to the GcvP family. N-terminal subunit subfamily. The glycine cleavage system is composed of four proteins: P, T, L and H. In this organism, the P 'protein' is a heterodimer of two subunits.

It catalyses the reaction N(6)-[(R)-lipoyl]-L-lysyl-[glycine-cleavage complex H protein] + glycine + H(+) = N(6)-[(R)-S(8)-aminomethyldihydrolipoyl]-L-lysyl-[glycine-cleavage complex H protein] + CO2. The glycine cleavage system catalyzes the degradation of glycine. The P protein binds the alpha-amino group of glycine through its pyridoxal phosphate cofactor; CO(2) is released and the remaining methylamine moiety is then transferred to the lipoamide cofactor of the H protein. The sequence is that of Probable glycine dehydrogenase (decarboxylating) subunit 1 from Brevibacillus brevis (strain 47 / JCM 6285 / NBRC 100599).